We begin with the raw amino-acid sequence, 435 residues long: Shikimate O-hydroxycinnamoyltransferase (435 aa).

Active-site proton acceptor residues include His-153 and Asp-382.

This sequence belongs to the plant acyltransferase family. Highly expressed in stem vascular tissues.

It carries out the reaction shikimate + 4-coumaroyl-CoA = trans-4-coumaroylshikimate + CoA. Acyltransferase involved in the biosynthesis of lignin. The affinity for shikimate as acceptor is 100-fold higher than for quinate. The most efficient donors are caffeoyl-CoA &gt; p-coumaroyl-CoA &gt; feruloyl-CoA &gt;&gt; sinapoyl-CoA. The chain is Shikimate O-hydroxycinnamoyltransferase (HST) from Nicotiana tabacum (Common tobacco).